Here is a 190-residue protein sequence, read N- to C-terminus: Casparian strip membrane protein 1 (190 aa).

Over 1–24 the chain is Cytoplasmic; the sequence is MKAESGSADAKLPLPPPVGRKRRG. A helical membrane pass occupies residues 25–45; that stretch reads LAILDFLLRLLAIGATLSAAI. The Extracellular portion of the chain corresponds to 46–72; sequence AMGTNNETLKFFTQFFQFNARFYNLSA. Residues N51 and N69 are each glycosylated (N-linked (GlcNAc...) asparagine). Residues 73–93 traverse the membrane as a helical segment; it reads FIYFVIANATVGLYLLLSLPF. The Cytoplasmic portion of the chain corresponds to 94 to 107; it reads SIFDIVRPRAAAFR. The chain crosses the membrane as a helical span at residues 108–128; that stretch reads VLLIFFDTVMVAVCTSGAAAA. The Extracellular segment spans residues 129–157; it reads TAIMYVARRGNTKTNWFSICQQFNSFCDQ. A helical transmembrane segment spans residues 158–178; that stretch reads ATGALGASFAAVVLLILLVLL. At 179–190 the chain is on the cytoplasmic side; that stretch reads SASTLHRQRADF.

Belongs to the Casparian strip membrane proteins (CASP) family. In terms of assembly, homodimer and heterodimers.

The protein resides in the cell membrane. Functionally, regulates membrane-cell wall junctions and localized cell wall deposition. Required for establishment of the Casparian strip membrane domain (CSD) and the subsequent formation of Casparian strips, a cell wall modification of the root endodermis that determines an apoplastic barrier between the intraorganismal apoplasm and the extraorganismal apoplasm and prevents lateral diffusion. This chain is Casparian strip membrane protein 1, found in Pinus taeda (Loblolly pine).